Here is a 227-residue protein sequence, read N- to C-terminus: Staphylococcal superantigen-like 10 (227 aa).

The first 30 residues, 1-30, serve as a signal peptide directing secretion; the sequence is MKFTALAKATLALGILTTGTLTTEVHSGHA.

This sequence belongs to the staphylococcal/streptococcal toxin family. As to quaternary structure, interacts with prothrombin/F2 and coagulation factor X/F12. Interacts with human CXCR4.

The protein localises to the secreted. In terms of biological role, plays a role in the inhibition of host complement activation via the classical pathway by interacting with the Fc region of human IgG and thereby interfering with the IgG/C1q interaction. Also inhibits the penultimate step of plasma clotting by interacting with prothrombin/F2 and coagulation factor X/F12. Does not affect the protease activity of thrombin but interferes with the conversion of prothrombin to thrombin. Interacts with human receptor CXCR4 and specifically inhibits CXCL12-induced calcium mobilization and cell migration. The chain is Staphylococcal superantigen-like 10 from Staphylococcus aureus (strain NCTC 8325 / PS 47).